We begin with the raw amino-acid sequence, 1486 residues long: Chromosome partition protein MukB (1486 aa).

34-41 (GGNGAGKS) contacts ATP. 3 coiled-coil regions span residues 334 to 418 (SDHL…QYNQ), 444 to 480 (LETF…QAYQ), and 509 to 603 (RHLA…RAPV). The segment at 666-783 (PGGSEDQRLN…EVPLFGRAAR (118 aa)) is flexible hinge. 3 coiled-coil regions span residues 835-923 (EAEI…AKLE), 977-1115 (EMLS…TAKA), and 1209-1266 (VEAI…QNVS).

The protein belongs to the SMC family. MukB subfamily. Homodimerization via its hinge domain. Binds to DNA via its C-terminal region. Interacts, and probably forms a ternary complex, with MukE and MukF via its C-terminal region. The complex formation is stimulated by calcium or magnesium. Interacts with tubulin-related protein FtsZ.

The protein resides in the cytoplasm. Its subcellular location is the nucleoid. Its function is as follows. Plays a central role in chromosome condensation, segregation and cell cycle progression. Functions as a homodimer, which is essential for chromosome partition. Involved in negative DNA supercoiling in vivo, and by this means organize and compact chromosomes. May achieve or facilitate chromosome segregation by condensation DNA from both sides of a centrally located replisome during cell division. The chain is Chromosome partition protein MukB from Shigella sonnei (strain Ss046).